Here is a 380-residue protein sequence, read N- to C-terminus: Cytochrome b (380 aa).

The next 4 helical transmembrane spans lie at 33 to 53 (FGSLLGLCLITQILTGLFLAM), 77 to 98 (WLIRNIHANGASFFFICIYMHI), 113 to 133 (WNIGVVLLLLVMMTAFVGYVL), and 178 to 198 (FFAFHFLLPFIIAAATVIHLL). H83 and H97 together coordinate heme b. Heme b is bound by residues H182 and H196. Residue H201 participates in a ubiquinone binding. 4 consecutive transmembrane segments (helical) span residues 226 to 246 (YKDLLGFVIMLLALTLLALFS), 288 to 308 (LGGVLALLFSILVLMVVPLLH), 320 to 340 (ITQFLFWTLVADMIILTWIGG), and 347 to 367 (FIIIGQIASVLYFALFLVLFP).

The protein belongs to the cytochrome b family. The cytochrome bc1 complex contains 3 respiratory subunits (MT-CYB, CYC1 and UQCRFS1), 2 core proteins (UQCRC1 and UQCRC2) and probably 6 low-molecular weight proteins. Requires heme b as cofactor.

Its subcellular location is the mitochondrion inner membrane. Functionally, component of the ubiquinol-cytochrome c reductase complex (complex III or cytochrome b-c1 complex) that is part of the mitochondrial respiratory chain. The b-c1 complex mediates electron transfer from ubiquinol to cytochrome c. Contributes to the generation of a proton gradient across the mitochondrial membrane that is then used for ATP synthesis. This Carassius auratus (Goldfish) protein is Cytochrome b (mt-cyb).